The chain runs to 301 residues: uncharacterized protein (301 aa).

Threonine 47 (charge relay system) is an active-site residue. Tyrosine 136 functions as the Proton donor in the catalytic mechanism. Residue lysine 165 is the Schiff-base intermediate with substrate of the active site.

The protein belongs to the DapA family. Homotetramer.

It localises to the cytoplasm. This is an uncharacterized protein from Thermofilum pendens (strain DSM 2475 / Hrk 5).